The sequence spans 137 residues: Protein Flattop homolog (137 aa).

It belongs to the Flattop family.

It is found in the cytoplasm. The protein localises to the cytoskeleton. Its subcellular location is the flagellum axoneme. Microtubule inner protein (MIP) part of the dynein-decorated doublet microtubules (DMTs) in cilia axoneme. Acts as a regulator of cilium basal body docking and positioning in mono- and multiciliated cells. Regulates basal body docking and cilia formation in multiciliated lung cells. Regulates kinocilium positioning and stereocilia bundle morphogenesis in the inner ear. The sequence is that of Protein Flattop homolog from Chlamydomonas reinhardtii (Chlamydomonas smithii).